The sequence spans 130 residues: Cystatin (130 aa).

The signal sequence occupies residues 1–19; sequence MEWKIVVPLFAVAFTVANA. The Secondary area of contact signature appears at 67-71; it reads QVVSG. Cystine bridges form between cysteine 85–cysteine 94 and cysteine 108–cysteine 128.

Belongs to the cystatin family.

The protein resides in the secreted. Cysteine proteinase inhibitor. The chain is Cystatin from Oncorhynchus mykiss (Rainbow trout).